The sequence spans 417 residues: NADH-quinone oxidoreductase subunit D (417 aa).

The protein belongs to the complex I 49 kDa subunit family. NDH-1 is composed of 14 different subunits. Subunits NuoB, C, D, E, F, and G constitute the peripheral sector of the complex.

It is found in the cell inner membrane. It catalyses the reaction a quinone + NADH + 5 H(+)(in) = a quinol + NAD(+) + 4 H(+)(out). Its function is as follows. NDH-1 shuttles electrons from NADH, via FMN and iron-sulfur (Fe-S) centers, to quinones in the respiratory chain. The immediate electron acceptor for the enzyme in this species is believed to be ubiquinone. Couples the redox reaction to proton translocation (for every two electrons transferred, four hydrogen ions are translocated across the cytoplasmic membrane), and thus conserves the redox energy in a proton gradient. The chain is NADH-quinone oxidoreductase subunit D from Ruthia magnifica subsp. Calyptogena magnifica.